A 542-amino-acid chain; its full sequence is Neurofilament light polypeptide (542 aa).

Residue Ser2 is modified to N-acetylserine. The interval Ser2 to Gln93 is head. Thr21 carries an O-linked (GlcNAc) threonine glycan. Arg23 bears the Asymmetric dimethylarginine; alternate mark. At Arg23 the chain carries Omega-N-methylarginine; alternate. Residue Ser27 is glycosylated (O-linked (GlcNAc) serine). Arg30 is modified (omega-N-methylarginine). Phosphotyrosine is present on Tyr43. A phosphoserine mark is found at Ser56, Ser67, and Ser103. The IF rod domain occupies Glu90–Leu401. The segment at Leu94–Leu125 is coil 1A. The segment at Arg126–Leu138 is linker 1. Residues Tyr139–Leu234 form a coil 1B region. The interval Gln235–Pro253 is linker 12. The segment at Asp254–Lys272 is coil 2A. The interval Asn273–Phe281 is linker 2. The segment at Lys282 to Glu397 is coil 2B. Residues Ala382–Lys392 are epitope; recognized by IF-specific monoclonal antibody. The tract at residues Glu398–Tyr444 is tail, subdomain A. Positions Glu398–Asp542 are tail. The tract at residues Thr445–Asp542 is tail, subdomain B (acidic). A disordered region spans residues Glu451–Asp542. Ser453 is modified (phosphoserine). Residues Glu460–Pro471 show a composition bias toward basic and acidic residues. Residues Pro472–Lys527 are compositionally biased toward acidic residues. Phosphoserine occurs at positions 473 and 503. At Thr519 the chain carries Phosphothreonine. 2 positions are modified to phosphoserine: Ser522 and Ser531. The segment covering Lys528–Asp542 has biased composition (basic and acidic residues).

Belongs to the intermediate filament family. Forms homodimers (in vitro). Forms heterodimers with NEFH or NEFM; which can further hetero-oligomerize (in vitro). Forms heterodimers with INA (in vitro). Interacts with ARHGEF28. Interacts with TRIM2. O-glycosylated; contains three N-acetylglucosamine side chains. In terms of processing, phosphorylated in the head and rod regions by the PKC kinase PKN1, leading to the inhibition of polymerization. Post-translationally, ubiquitinated in the presence of TRIM2 and UBE2D1. Expressed in the dorsal root ganglion neurons (at protein level).

The protein resides in the cell projection. It localises to the axon. The protein localises to the cytoplasm. It is found in the cytoskeleton. Neurofilaments usually contain three intermediate filament proteins: NEFL, NEFM, and NEFH which are involved in the maintenance of neuronal caliber. May additionally cooperate with the neuronal intermediate filament proteins PRPH and INA to form neuronal filamentous networks. In Rattus norvegicus (Rat), this protein is Neurofilament light polypeptide (Nefl).